We begin with the raw amino-acid sequence, 219 residues long: Glutamine transport system permease protein GlnP (219 aa).

Topologically, residues 1–22 (MQFDWSAIWPAIPLLIEGAKMT) are periplasmic. The region spanning 19–209 (AKMTLWISVL…IITLVLSFIL (191 aa)) is the ABC transmembrane type-1 domain. The chain crosses the membrane as a helical span at residues 23–43 (LWISVLGLAGGLVIGLLAGFA). The Cytoplasmic segment spans residues 44–53 (RTFGGWIANH). The helical transmembrane segment at 54-74 (VALVFIEVIRGTPIVVQVMFI) threads the bilayer. Residues 75–88 (YFALPMAFNDLRID) lie on the Periplasmic side of the membrane. A helical membrane pass occupies residues 89–109 (PFTAAVVTIMINSGAYIAEIT). At 110-150 (RGAVLSIHKGFREAGLALGLSRWETIRYVILPLALRRMLPP) the chain is on the cytoplasmic side. Residues 151–171 (LGNQWIISIKDTSLFIVIGVA) form a helical membrane-spanning segment. Topologically, residues 172–187 (ELTRQGQEIIAGNFRA) are periplasmic. A helical membrane pass occupies residues 188-208 (LEIWSAVAVFYLIITLVLSFI). The Cytoplasmic portion of the chain corresponds to 209 to 219 (LRRLERRMKIL).

This sequence belongs to the binding-protein-dependent transport system permease family. HisMQ subfamily.

The protein resides in the cell inner membrane. Its function is as follows. Part of the binding-protein-dependent transport system for glutamine; probably responsible for the translocation of the substrate across the membrane. The protein is Glutamine transport system permease protein GlnP (glnP) of Escherichia coli O6:H1 (strain CFT073 / ATCC 700928 / UPEC).